The chain runs to 424 residues: MRDSSTTASTKSSPLWKPFASNCCSVDDQTVFGNLSRCRPSRSEFSKNHLGPLPSFRRLSFADLSRSSSARINEDLAQTLGADLVDFQMCELKMITQSFSGNYLLGEGGFGKVYKGYVDDYLRQSLKAQPVAVKLLDIEGLQGHREWLSEVIFLGQLKHPNLVKLIGYCCEEEERVLIYEFMPRGSLENHLFRRISLSLPWATRLKIAVAAAKGLAFLHDLESPIIYRDFKTSNILLDSDFTAKLSDFGLAKMGPEGSKSHVTTRVMGTYGYAAPEYVSTGHLTTKSDVYSYGVVLLELLTGRRATEKSRPKNQQNIIDWSKPYLTSSRRLRCVMDPRLAGQYSVKAAKDTALLALQCVSPNPKDRPKMLAVVEALESLIHYKDMAVSSGHWPLSPKSQGGKVSPKVRGDHRSGRKSAPGSLRS.

The region spanning 99-380 (FSGNYLLGEG…AVVEALESLI (282 aa)) is the Protein kinase domain. ATP-binding positions include 105–113 (LGEGGFGKV) and lysine 134. Phosphotyrosine is present on tyrosine 179. The Proton acceptor role is filled by aspartate 229. Phosphoserine is present on serine 233. Phosphothreonine is present on residues threonine 264 and threonine 269. Tyrosine 277 is modified (phosphotyrosine). The interval 390-424 (GHWPLSPKSQGGKVSPKVRGDHRSGRKSAPGSLRS) is disordered.

This sequence belongs to the protein kinase superfamily. Ser/Thr protein kinase family. Interacts with the Xanthomonas campestris effector XopAC/AvrAC.

It is found in the cell membrane. The enzyme catalyses L-seryl-[protein] + ATP = O-phospho-L-seryl-[protein] + ADP + H(+). It catalyses the reaction L-threonyl-[protein] + ATP = O-phospho-L-threonyl-[protein] + ADP + H(+). Functionally, may be involved in plant defense signaling. This Arabidopsis thaliana (Mouse-ear cress) protein is Probable serine/threonine-protein kinase PBL15.